The chain runs to 213 residues: Kynurenine formamidase (213 aa).

Substrate is bound at residue Trp18. Residues His48, His52, and Asp54 each coordinate Zn(2+). His58 functions as the Proton donor/acceptor in the catalytic mechanism. Positions 160 and 172 each coordinate Zn(2+).

The protein belongs to the Cyclase 1 superfamily. KynB family. As to quaternary structure, homodimer. Requires Zn(2+) as cofactor.

It catalyses the reaction N-formyl-L-kynurenine + H2O = L-kynurenine + formate + H(+). Its pathway is amino-acid degradation; L-tryptophan degradation via kynurenine pathway; L-kynurenine from L-tryptophan: step 2/2. Functionally, catalyzes the hydrolysis of N-formyl-L-kynurenine to L-kynurenine, the second step in the kynurenine pathway of tryptophan degradation. In Burkholderia mallei (strain NCTC 10247), this protein is Kynurenine formamidase.